Reading from the N-terminus, the 328-residue chain is Ferredoxin--NADP reductase 1 (328 aa).

Residues Asp28, Gln36, Tyr41, Ala81, Ile116, Asp277, and Ser320 each coordinate FAD.

This sequence belongs to the ferredoxin--NADP reductase type 2 family. As to quaternary structure, homodimer. Requires FAD as cofactor.

The catalysed reaction is 2 reduced [2Fe-2S]-[ferredoxin] + NADP(+) + H(+) = 2 oxidized [2Fe-2S]-[ferredoxin] + NADPH. This is Ferredoxin--NADP reductase 1 from Sulfolobus acidocaldarius (strain ATCC 33909 / DSM 639 / JCM 8929 / NBRC 15157 / NCIMB 11770).